The chain runs to 27 residues: Pregnancy-associated glycoprotein 55 (27 aa).

Belongs to the peptidase A1 family. In terms of processing, glycosylated. Placenta.

The polypeptide is Pregnancy-associated glycoprotein 55 (PAG55) (Capra hircus (Goat)).